The primary structure comprises 282 residues: tRNA pseudouridine synthase B (282 aa).

D39 serves as the catalytic Nucleophile.

It belongs to the pseudouridine synthase TruB family. Type 1 subfamily.

It catalyses the reaction uridine(55) in tRNA = pseudouridine(55) in tRNA. Its function is as follows. Responsible for synthesis of pseudouridine from uracil-55 in the psi GC loop of transfer RNAs. This is tRNA pseudouridine synthase B from Borrelia garinii subsp. bavariensis (strain ATCC BAA-2496 / DSM 23469 / PBi) (Borreliella bavariensis).